We begin with the raw amino-acid sequence, 389 residues long: Formate-dependent phosphoribosylglycinamide formyltransferase (389 aa).

Residues 12-13 (EL) and glutamate 72 contribute to the N(1)-(5-phospho-beta-D-ribosyl)glycinamide site. ATP contacts are provided by residues arginine 104, lysine 145, 150 to 155 (SSGKGQ), 185 to 188 (EAFV), and glutamate 193. Residues 109 to 300 (DLASKELGLR…EFELHARAVL (192 aa)) enclose the ATP-grasp domain. Positions 258 and 270 each coordinate Mg(2+). N(1)-(5-phospho-beta-D-ribosyl)glycinamide-binding positions include aspartate 277, lysine 348, and 355–356 (RR).

This sequence belongs to the PurK/PurT family. As to quaternary structure, homodimer.

The catalysed reaction is N(1)-(5-phospho-beta-D-ribosyl)glycinamide + formate + ATP = N(2)-formyl-N(1)-(5-phospho-beta-D-ribosyl)glycinamide + ADP + phosphate + H(+). The protein operates within purine metabolism; IMP biosynthesis via de novo pathway; N(2)-formyl-N(1)-(5-phospho-D-ribosyl)glycinamide from N(1)-(5-phospho-D-ribosyl)glycinamide (formate route): step 1/1. In terms of biological role, involved in the de novo purine biosynthesis. Catalyzes the transfer of formate to 5-phospho-ribosyl-glycinamide (GAR), producing 5-phospho-ribosyl-N-formylglycinamide (FGAR). Formate is provided by PurU via hydrolysis of 10-formyl-tetrahydrofolate. In Chlorobium phaeobacteroides (strain DSM 266 / SMG 266 / 2430), this protein is Formate-dependent phosphoribosylglycinamide formyltransferase.